We begin with the raw amino-acid sequence, 327 residues long: Malate dehydrogenase (327 aa).

11 to 17 (GAAGQIA) contacts NAD(+). Positions 92 and 98 each coordinate substrate. Residues N105, Q112, and 129-131 (VGN) contribute to the NAD(+) site. The substrate site is built by N131 and R162. The Proton acceptor role is filled by H187.

This sequence belongs to the LDH/MDH superfamily. MDH type 2 family.

The enzyme catalyses (S)-malate + NAD(+) = oxaloacetate + NADH + H(+). In terms of biological role, catalyzes the reversible oxidation of malate to oxaloacetate. The chain is Malate dehydrogenase from Nitrosospira multiformis (strain ATCC 25196 / NCIMB 11849 / C 71).